The primary structure comprises 306 residues: Golgi to ER traffic protein 2 (306 aa).

Residues 1-18 (MSEISDAEKRRILREKRQ) show a composition bias toward basic and acidic residues. Positions 1-100 (MSEISDAEKR…PPGSAEQQNG (100 aa)) are disordered. Residues 1–172 (MSEISDAEKR…VEAHNIAVNK (172 aa)) are Cytoplasmic-facing. Over residues 34–57 (TGQTENSFLSTESPLDSRESTYPA) the composition is skewed to polar residues. A compositionally biased stretch (basic and acidic residues) spans 68–77 (DSTKQMDELL). Positions 78 to 90 (AKATSKTTSKASS) are enriched in low complexity. Over residues 91-100 (PPGSAEQQNG) the composition is skewed to polar residues. The helical transmembrane segment at 173–193 (LKSYTILVKWLFFLLPYLYYI) threads the bilayer. Over 194 to 214 (THSARDPFQHNAVNYVLDRSN) the chain is Lumenal. The chain crosses the membrane as a helical span at residues 215–234 (FFTVFTTFEIVALSVYYQLL). Topologically, residues 235 to 281 (MSAEKSHNVNTLDNNSKILKLVSMVPPGLVPIPNLRGKVAQALQYWD) are cytoplasmic. Residues 282–302 (VVSMYLTDLCFAIVLAGLFQY) form a helical membrane-spanning segment. Over 303–306 (YHSM) the chain is Lumenal.

It belongs to the GET2 family. In terms of assembly, component of the Golgi to ER traffic (GET) complex, which is composed of GET1, GET2 and GET3. Within the complex, GET1 and GET2 form a heterotetramer which is stabilized by phosphatidylinositol binding and which binds to the GET3 homodimer.

It is found in the endoplasmic reticulum membrane. It localises to the golgi apparatus membrane. Its function is as follows. Required for the post-translational delivery of tail-anchored (TA) proteins to the endoplasmic reticulum. Together with GET1, acts as a membrane receptor for soluble GET3, which recognizes and selectively binds the transmembrane domain of TA proteins in the cytosol. The GET complex cooperates with the HDEL receptor ERD2 to mediate the ATP-dependent retrieval of resident ER proteins that contain a C-terminal H-D-E-L retention signal from the Golgi to the ER. The chain is Golgi to ER traffic protein 2 from Lachancea thermotolerans (strain ATCC 56472 / CBS 6340 / NRRL Y-8284) (Yeast).